A 158-amino-acid polypeptide reads, in one-letter code: Pyruvoyl-dependent arginine decarboxylase (158 aa).

Ser44 is modified (pyruvic acid (Ser)).

It belongs to the PdaD family. The cofactor is pyruvate.

The catalysed reaction is L-arginine + H(+) = agmatine + CO2. The sequence is that of Pyruvoyl-dependent arginine decarboxylase from Pyrococcus furiosus (strain ATCC 43587 / DSM 3638 / JCM 8422 / Vc1).